Consider the following 228-residue polypeptide: NAD(P)H-hydrate epimerase (228 aa).

The region spanning 10–214 is the YjeF N-terminal domain; it reads AIDIDQELFN…DLERKYDLKI (205 aa). Position 58-62 (58-62) interacts with (6S)-NADPHX; the sequence is NNGGD. The K(+) site is built by asparagine 59 and aspartate 123. (6S)-NADPHX contacts are provided by residues 127–133 and aspartate 156; that span reads GFSFKPP. A K(+)-binding site is contributed by serine 159.

It belongs to the NnrE/AIBP family. Requires K(+) as cofactor.

The catalysed reaction is (6R)-NADHX = (6S)-NADHX. It carries out the reaction (6R)-NADPHX = (6S)-NADPHX. Functionally, catalyzes the epimerization of the S- and R-forms of NAD(P)HX, a damaged form of NAD(P)H that is a result of enzymatic or heat-dependent hydration. This is a prerequisite for the S-specific NAD(P)H-hydrate dehydratase to allow the repair of both epimers of NAD(P)HX. This chain is NAD(P)H-hydrate epimerase, found in Pediculus humanus subsp. corporis (Body louse).